Consider the following 634-residue polypeptide: uncharacterized protein (634 aa).

An N-terminal signal peptide occupies residues 1–40 (MWLQQRLKGLPGLLSSSWARRLLCLLGLLLLLLWFGGSGA). The Extracellular portion of the chain corresponds to 41 to 589 (RRAAGGLHLL…DEHMAQQDPG (549 aa)). The N-linked (GlcNAc...) asparagine glycan is linked to asparagine 363. A helical transmembrane segment spans residues 590–610 (LPFLFWFSVASLITLFHLFLF). Residues 611 to 634 (KLIYNEYCGPGAKPLFRSKEDPSV) lie on the Cytoplasmic side of the membrane.

Its subcellular location is the membrane. This is an uncharacterized protein from Homo sapiens (Human).